The following is a 316-amino-acid chain: Ribosomal protein L11 methyltransferase (316 aa).

S-adenosyl-L-methionine is bound by residues Thr-163, Gly-184, Asp-206, and Asn-249.

The protein belongs to the methyltransferase superfamily. PrmA family.

It is found in the cytoplasm. The catalysed reaction is L-lysyl-[protein] + 3 S-adenosyl-L-methionine = N(6),N(6),N(6)-trimethyl-L-lysyl-[protein] + 3 S-adenosyl-L-homocysteine + 3 H(+). Its function is as follows. Methylates ribosomal protein L11. In Pediococcus pentosaceus (strain ATCC 25745 / CCUG 21536 / LMG 10740 / 183-1w), this protein is Ribosomal protein L11 methyltransferase.